Consider the following 344-residue polypeptide: MIKVGIVGGTGYTGVELLRLLAQHPQAEVAVITSRSEAGVAVADMYPNLRGHYDGLTFSVPDSKTLGACDVVFFATPHGVAHALAGELLAAGTKVIDLSADFRLQDAAEWGKWYGQPHGAPELLKDAVYGLPEVNREKIRQARLIAVPGCYPTATQLGFLPLLEAGLADPARLIADCKSGVSGAGRGAAVGSLFCEAGESMKAYAVKGHRHLPEISQGLRLAAGKDVGLTFVPHLTPMIRGIHATLYATVADTSVDLQALFEKRYANEPFVDVMPAGSHPETRSVRGANVCRIAVHRPQGGDLVVVLSVIDNLVKGASGQAVQNLNILFGLDERMGLAHAGLLP.

Cys-150 is a catalytic residue.

Belongs to the NAGSA dehydrogenase family. Type 1 subfamily.

The protein localises to the cytoplasm. The enzyme catalyses N-acetyl-L-glutamate 5-semialdehyde + phosphate + NADP(+) = N-acetyl-L-glutamyl 5-phosphate + NADPH + H(+). The protein operates within amino-acid biosynthesis; L-arginine biosynthesis; N(2)-acetyl-L-ornithine from L-glutamate: step 3/4. Its function is as follows. Catalyzes the NADPH-dependent reduction of N-acetyl-5-glutamyl phosphate to yield N-acetyl-L-glutamate 5-semialdehyde. This Pseudomonas entomophila (strain L48) protein is N-acetyl-gamma-glutamyl-phosphate reductase.